A 442-amino-acid chain; its full sequence is Proline--tRNA ligase (442 aa).

The protein belongs to the class-II aminoacyl-tRNA synthetase family. ProS type 2 subfamily. In terms of assembly, homodimer.

Its subcellular location is the cytoplasm. The enzyme catalyses tRNA(Pro) + L-proline + ATP = L-prolyl-tRNA(Pro) + AMP + diphosphate. Catalyzes the attachment of proline to tRNA(Pro) in a two-step reaction: proline is first activated by ATP to form Pro-AMP and then transferred to the acceptor end of tRNA(Pro). The polypeptide is Proline--tRNA ligase (Brucella ovis (strain ATCC 25840 / 63/290 / NCTC 10512)).